A 313-amino-acid chain; its full sequence is NADH-ubiquinone oxidoreductase chain 1 (313 aa).

10 helical membrane passes run 6–26, 31–51, 62–82, 84–104, 109–129, 142–162, 183–203, 216–235, 250–270, and 286–306; these read IIIIIIIDILVVLILTGFVSL, ILALVQIRIGPALCFFGILTP, FIIFVISFDIIYLIGAMIITA, CIFLGWFYFPIGFILLLDTGF, MLCVHVFCSMFSTFFVGCFLF, MFFSIISESGIFLLYTTIYSL, FYIAGVLFISVFWVSMLLDGL, LVAGLITELSGFFFVLYSVL, LCFGGLFICFKAILILIFGFF, and AFILIFLFYMCVLMFIWLFTT.

It belongs to the complex I subunit 1 family.

It is found in the mitochondrion inner membrane. The enzyme catalyses a ubiquinone + NADH + 5 H(+)(in) = a ubiquinol + NAD(+) + 4 H(+)(out). Functionally, core subunit of the mitochondrial membrane respiratory chain NADH dehydrogenase (Complex I) that is believed to belong to the minimal assembly required for catalysis. Complex I functions in the transfer of electrons from NADH to the respiratory chain. The immediate electron acceptor for the enzyme is believed to be ubiquinone. The chain is NADH-ubiquinone oxidoreductase chain 1 (ND1) from Leishmania tarentolae (Sauroleishmania tarentolae).